Here is a 362-residue protein sequence, read N- to C-terminus: Histidinol-phosphate aminotransferase (362 aa).

An N6-(pyridoxal phosphate)lysine modification is found at lysine 211.

Belongs to the class-II pyridoxal-phosphate-dependent aminotransferase family. Histidinol-phosphate aminotransferase subfamily. In terms of assembly, homodimer. It depends on pyridoxal 5'-phosphate as a cofactor.

The enzyme catalyses L-histidinol phosphate + 2-oxoglutarate = 3-(imidazol-4-yl)-2-oxopropyl phosphate + L-glutamate. Its pathway is amino-acid biosynthesis; L-histidine biosynthesis; L-histidine from 5-phospho-alpha-D-ribose 1-diphosphate: step 7/9. This is Histidinol-phosphate aminotransferase from Serratia proteamaculans (strain 568).